A 390-amino-acid polypeptide reads, in one-letter code: Putative gustatory receptor 59d (390 aa).

Topologically, residues 1–38 are cytoplasmic; sequence MADLLKLCLRIAYAYGRLTGVINFKIDLKTGQALVTRG. A helical membrane pass occupies residues 39–59; that stretch reads ATLISVSTHLLIFALLLYQTM. The Extracellular portion of the chain corresponds to 60-75; that stretch reads RKSVVNVMWKYANSLH. A helical transmembrane segment spans residues 76-96; it reads EYVFLVIAGFRVVCVFLELVS. At 97-128 the chain is on the cytoplasmic side; sequence RWSQRRTFVRLFNSFRRLYQRNPDIIQYCRRS. The chain crosses the membrane as a helical span at residues 129-149; sequence IVSKFFCVTMTETLHIIVTLA. Residues 150–156 are Extracellular-facing; sequence MMRNRLS. Residues 157–177 traverse the membrane as a helical segment; the sequence is IALALRIWAVLSLTAIINVII. Residues 178–252 are Cytoplasmic-facing; the sequence is TQYYVATACV…NLSTAYEGEV (75 aa). The helical transmembrane segment at 253–273 threads the bilayer; it reads VCLVITYYLNMLGTSYLLFSI. Over 274–283 the chain is Extracellular; that stretch reads SKYGNFGNNL. The chain crosses the membrane as a helical span at residues 284–304; the sequence is LVIITLCGIVYFVFYVVDCWI. Over 305–366 the chain is Cytoplasmic; that stretch reads NAFNVFYLLD…MYGLFEFGRG (62 aa). A helical transmembrane segment spans residues 367 to 383; the sequence is TSFAVFNSLLTHSLLLI. At 384-390 the chain is on the extracellular side; sequence QYDVQNF.

Belongs to the insect chemoreceptor superfamily. Gustatory receptor (GR) family. Gr22e subfamily. As to expression, expressed in the adult labellar chemosensory neurons. In larvae, is expressed in neurons of the terminal external chemosensory organ as well as in the dorsal pharyngeal sense organ.

The protein resides in the cell membrane. Probable gustatory receptor which mediates acceptance or avoidance behavior, depending on its substrates. The sequence is that of Putative gustatory receptor 59d (Gr59d) from Drosophila melanogaster (Fruit fly).